The primary structure comprises 37 residues: Large ribosomal subunit protein bL36c (37 aa).

The protein belongs to the bacterial ribosomal protein bL36 family.

Its subcellular location is the plastid. The protein resides in the chloroplast. This Adiantum capillus-veneris (Maidenhair fern) protein is Large ribosomal subunit protein bL36c.